A 461-amino-acid chain; its full sequence is Cysteine--tRNA ligase (461 aa).

Position 31 (Cys-31) interacts with Zn(2+). A 'HIGH' region motif is present at residues 33–43 (PTVYDFAHIGN). Positions 219, 244, and 248 each coordinate Zn(2+). The short motif at 277–281 (KMSKS) is the 'KMSKS' region element. Position 280 (Lys-280) interacts with ATP. Over residues 436–452 (SEKGIQLKDGKDKETGE) the composition is skewed to basic and acidic residues. The disordered stretch occupies residues 436-461 (SEKGIQLKDGKDKETGERTTTWELKR).

This sequence belongs to the class-I aminoacyl-tRNA synthetase family. Monomer. Requires Zn(2+) as cofactor.

It is found in the cytoplasm. The enzyme catalyses tRNA(Cys) + L-cysteine + ATP = L-cysteinyl-tRNA(Cys) + AMP + diphosphate. In Agrobacterium fabrum (strain C58 / ATCC 33970) (Agrobacterium tumefaciens (strain C58)), this protein is Cysteine--tRNA ligase.